The primary structure comprises 159 residues: Trafficking protein particle complex subunit 6A (159 aa).

Ser-33 is modified (phosphoserine).

This sequence belongs to the TRAPP small subunits family. BET3 subfamily. As to quaternary structure, part of the multisubunit transport protein particle (TRAPP) complex. Heterodimer with TRAPPC3. The heterodimer TRAPPC3-TRAPPC6A interacts with TRAPPC2L. Interacts with TRAPPC2L.

The protein localises to the golgi apparatus. The protein resides in the cis-Golgi network. Its subcellular location is the endoplasmic reticulum. May play a role in vesicular transport during the biogenesis of melanosomes. In Homo sapiens (Human), this protein is Trafficking protein particle complex subunit 6A.